Here is a 767-residue protein sequence, read N- to C-terminus: Two-component response regulator-like PRR73 (767 aa).

A disordered region spans residues 1–64; the sequence is MGSACEAGTD…EPQQTDEQKE (64 aa). Positions 82 to 200 constitute a Response regulatory domain; that stretch reads RVLLVENDDS…ELKNLWQHVW (119 aa). Positions 205-214 are enriched in low complexity; the sequence is SSSGSGSESG. Disordered regions lie at residues 205 to 272, 312 to 388, 476 to 546, 646 to 701, and 727 to 767; these read SSSG…QSSW, RWLP…NEPT, ASNQ…RGKV, ANYS…SGSG, and NFGK…DEDR. The span at 238-252 shows a compositional bias: acidic residues; that stretch reads DNEDDDDNDEDDDDL. 3 stretches are compositionally biased toward polar residues: residues 263–272, 343–361, and 488–497; these read DNGSGTQSSW, RNSSMEYQSSPREMSVNPT, and CSPQDNSSEA. The segment covering 518–531 has biased composition (low complexity); that stretch reads GSNGSSNNNDMGSS. Residues 532-543 show a composition bias toward polar residues; the sequence is TKNAITKPSSNR. A compositionally biased stretch (gly residues) spans 689 to 700; sequence GAGGGNGSGSGS. In terms of domain architecture, CCT spans 712-754; the sequence is REAALNKFRQKRKVRNFGKKVRYQSRKRLAEQRPRIRGQFVRQ. Basic residues predominate over residues 727–738; it reads NFGKKVRYQSRK.

Belongs to the ARR-like family.

Its subcellular location is the nucleus. Functionally, controls photoperiodic flowering response. Seems to be one of the component of the circadian clock. Expression of several members of the ARR-like family is controlled by circadian rhythm. The particular coordinated sequential expression of PRR73, PRR37, PRR95, PRR59 and PPR1 result to circadian waves that may be at the basis of the endogenous circadian clock. In Oryza sativa subsp. indica (Rice), this protein is Two-component response regulator-like PRR73 (PRR73).